We begin with the raw amino-acid sequence, 523 residues long: 2-isopropylmalate synthase (523 aa).

In terms of domain architecture, Pyruvate carboxyltransferase spans 5–267; that stretch reads VIIFDTTLRD…ETGINAKEIH (263 aa). Mn(2+) is bound by residues aspartate 14, histidine 202, histidine 204, and asparagine 238. The tract at residues 392–523 is regulatory domain; the sequence is KLQQLVVHSD…QQNKRELGGV (132 aa).

The protein belongs to the alpha-IPM synthase/homocitrate synthase family. LeuA type 1 subfamily. In terms of assembly, homodimer. The cofactor is Mn(2+).

It is found in the cytoplasm. The enzyme catalyses 3-methyl-2-oxobutanoate + acetyl-CoA + H2O = (2S)-2-isopropylmalate + CoA + H(+). It functions in the pathway amino-acid biosynthesis; L-leucine biosynthesis; L-leucine from 3-methyl-2-oxobutanoate: step 1/4. In terms of biological role, catalyzes the condensation of the acetyl group of acetyl-CoA with 3-methyl-2-oxobutanoate (2-ketoisovalerate) to form 3-carboxy-3-hydroxy-4-methylpentanoate (2-isopropylmalate). The chain is 2-isopropylmalate synthase from Shewanella pealeana (strain ATCC 700345 / ANG-SQ1).